The sequence spans 204 residues: Pneumococcal vaccine antigen A (204 aa).

The protein localises to the cell surface. This is Pneumococcal vaccine antigen A (pvaA) from Streptococcus pneumoniae serotype 4 (strain ATCC BAA-334 / TIGR4).